The primary structure comprises 539 residues: Cell division control protein 6 homolog (539 aa).

Residues 1 to 40 form a disordered region; it reads MPAIAGPSSSPQKHVVGSRSESIGGVRSAEVNTSRKRKLI. The Nuclear localization signal signature appears at 35 to 38; the sequence is RKRK.

It belongs to the CDC6/cdc18 family. Highly expressed in roots, flower buds and etiolated seedlings. Expressed in leaves and stems. Highly expressed in proliferating cells such as root meristems, leaf primordia and young growing leaves, as well as cells undergoing endoreduplication cycles.

Its subcellular location is the nucleus. Functionally, may be involved in the initiation of DNA replication. May play a role in endoreduplication. Could act as one of the factors that contributes to maintain endoreduplication competence. The chain is Cell division control protein 6 homolog from Arabidopsis thaliana (Mouse-ear cress).